The chain runs to 394 residues: Na(+)/H(+) antiporter NhaA (394 aa).

Helical transmembrane passes span 14-34, 59-79, 95-115, 125-145, 154-174, 179-199, 213-233, 254-274, 292-312, 328-348, and 363-383; these read AGGLILIIAAAIALLMANSAL, LLLWINDGLMAVFFLVVGLEV, VFPAIAALGGMLAPALIYLLF, GWAIPAATDIAFALGVMALLG, VFLLALAIIDDLGVIIIIALF, VSLQSLGIAAAAIALLAYMNW, LVLWVCILKSGVHATLAGVIV, GLHPWVAYLILPLFAFANAGV, IATGLFIGKPLGIFTFSWLAV, IFAVSVLCGIGFTMSIFIASL, and LGILLGSTTAAVVGYSLLRLV.

The protein belongs to the NhaA Na(+)/H(+) (TC 2.A.33) antiporter family.

Its subcellular location is the cell inner membrane. The enzyme catalyses Na(+)(in) + 2 H(+)(out) = Na(+)(out) + 2 H(+)(in). Its function is as follows. Na(+)/H(+) antiporter that extrudes sodium in exchange for external protons. The polypeptide is Na(+)/H(+) antiporter NhaA (Yersinia pseudotuberculosis serotype O:1b (strain IP 31758)).